A 254-amino-acid chain; its full sequence is 5-keto-D-gluconate 5-reductase (254 aa).

An NADP(+)-binding site is contributed by 13–37 (LITGSAQGIGFLLATGLGKYGAQII). A substrate-binding site is contributed by S145. Catalysis depends on Y158, which acts as the Proton acceptor.

The protein belongs to the short-chain dehydrogenases/reductases (SDR) family.

It carries out the reaction D-gluconate + NAD(+) = 5-dehydro-D-gluconate + NADH + H(+). The enzyme catalyses D-gluconate + NADP(+) = 5-dehydro-D-gluconate + NADPH + H(+). The protein operates within carbohydrate acid metabolism; L-idonate degradation. Catalyzes the reduction of 5-keto-D-gluconate to D-gluconate, using either NADH or NADPH. Is likely involved in an L-idonate degradation pathway that allows E.coli to utilize L-idonate as the sole carbon and energy source. Is also able to catalyze the reverse reaction in vitro, but the D-gluconate oxidation by the enzyme can only proceed with NAD. The polypeptide is 5-keto-D-gluconate 5-reductase (Escherichia coli O6:H1 (strain CFT073 / ATCC 700928 / UPEC)).